We begin with the raw amino-acid sequence, 440 residues long: Transposon Ty1-NL1 Gag polyprotein (440 aa).

4 stretches are compositionally biased toward polar residues: residues 1–23, 48–60, 71–86, and 131–152; these read MESQQLSQHSPISHGSACASVTS, TKANSQQTTTPAS, SPQTAQSHSPQNGPYQ, and PQYPSSVGTPLSTPSPESGNTF. Disordered regions lie at residues 1 to 86, 131 to 171, and 350 to 425; these read MESQ…GPYQ, PQYP…YVRP, and QQES…TEPI. The segment covering 153–165 has biased composition (low complexity); it reads TDSSSADSDMTST. The RNA-binding stretch occupies residues 299–401; the sequence is NNGIPINNKV…NSQSRTARAH (103 aa). Residues 363–372 show a composition bias toward basic and acidic residues; it reads NPSDEKKDSR. Residues 373 to 412 show a composition bias toward polar residues; that stretch reads TYTNTTKPKSITRNSQKPNNSQSRTARAHNVSTSNNSSGP.

Homotrimer.

It localises to the cytoplasm. Capsid protein (CA) is the structural component of the virus-like particle (VLP), forming the shell that encapsulates the retrotransposons dimeric RNA genome. The particles are assembled from trimer-clustered units and there are holes in the capsid shells that allow for the diffusion of macromolecules. CA also has nucleocapsid-like chaperone activity, promoting primer tRNA(i)-Met annealing to the multipartite primer-binding site (PBS), dimerization of Ty1 RNA and initiation of reverse transcription. The polypeptide is Transposon Ty1-NL1 Gag polyprotein (TY1A-NL1) (Saccharomyces cerevisiae (strain ATCC 204508 / S288c) (Baker's yeast)).